We begin with the raw amino-acid sequence, 160 residues long: Putative pre-16S rRNA nuclease (160 aa).

Belongs to the YqgF nuclease family.

It is found in the cytoplasm. Could be a nuclease involved in processing of the 5'-end of pre-16S rRNA. This Gluconobacter oxydans (strain 621H) (Gluconobacter suboxydans) protein is Putative pre-16S rRNA nuclease.